The sequence spans 241 residues: MSAIKDESNNDHLVQSHDPEHPANLIPALCRNFYGHGWVTGTGGGASIKRDNHIFIAPSGVQKELIQPHNIFVLQYPTPKYPPSARQYIRKPLELKPSACTPLFLAAFDRGAGCCIHTHSQWAVLVTLLVEREKGLEGCFEISNIEQIKGIPKGKGKGMMGFFDTLKIPIIENTAFEEDLTSSLEEAMEKYPDTYAVLVRRHGIYVWGDDVAKAKTQCESLDYLFQLAVEMHKLGLPWVKP.

C100 provides a ligand contact to substrate. Residues H117 and H119 each contribute to the Zn(2+) site. E146 serves as the catalytic Proton donor/acceptor. Zn(2+) is bound at residue H202.

This sequence belongs to the aldolase class II family. MtnB subfamily. Requires Zn(2+) as cofactor.

It localises to the cytoplasm. It catalyses the reaction 5-(methylsulfanyl)-D-ribulose 1-phosphate = 5-methylsulfanyl-2,3-dioxopentyl phosphate + H2O. It functions in the pathway amino-acid biosynthesis; L-methionine biosynthesis via salvage pathway; L-methionine from S-methyl-5-thio-alpha-D-ribose 1-phosphate: step 2/6. Its function is as follows. Catalyzes the dehydration of methylthioribulose-1-phosphate (MTRu-1-P) into 2,3-diketo-5-methylthiopentyl-1-phosphate (DK-MTP-1-P). This is Methylthioribulose-1-phosphate dehydratase from Ajellomyces dermatitidis (strain ER-3 / ATCC MYA-2586) (Blastomyces dermatitidis).